A 92-amino-acid chain; its full sequence is Small ribosomal subunit protein uS19 (92 aa).

The protein belongs to the universal ribosomal protein uS19 family.

Its function is as follows. Protein S19 forms a complex with S13 that binds strongly to the 16S ribosomal RNA. The sequence is that of Small ribosomal subunit protein uS19 from Aliivibrio fischeri (strain ATCC 700601 / ES114) (Vibrio fischeri).